The sequence spans 184 residues: Photosystem I assembly protein Ycf4 (184 aa).

The next 2 helical transmembrane spans lie at 22–42 (VCWAFILFLGSLGFLLVGTSS) and 57–77 (IIFFPQGIVMSFYGIAGLFIS).

Belongs to the Ycf4 family.

The protein localises to the plastid. It is found in the chloroplast thylakoid membrane. Its function is as follows. Seems to be required for the assembly of the photosystem I complex. This chain is Photosystem I assembly protein Ycf4, found in Morus indica (Mulberry).